We begin with the raw amino-acid sequence, 290 residues long: Lipoyl synthase (290 aa).

Residues C36, C41, C47, C62, C66, C69, and S275 each contribute to the [4Fe-4S] cluster site. One can recognise a Radical SAM core domain in the interval 48 to 264 (FSKKTATFMI…KEEALKIGFS (217 aa)).

Belongs to the radical SAM superfamily. Lipoyl synthase family. Requires [4Fe-4S] cluster as cofactor.

It localises to the cytoplasm. It catalyses the reaction [[Fe-S] cluster scaffold protein carrying a second [4Fe-4S](2+) cluster] + N(6)-octanoyl-L-lysyl-[protein] + 2 oxidized [2Fe-2S]-[ferredoxin] + 2 S-adenosyl-L-methionine + 4 H(+) = [[Fe-S] cluster scaffold protein] + N(6)-[(R)-dihydrolipoyl]-L-lysyl-[protein] + 4 Fe(3+) + 2 hydrogen sulfide + 2 5'-deoxyadenosine + 2 L-methionine + 2 reduced [2Fe-2S]-[ferredoxin]. Its pathway is protein modification; protein lipoylation via endogenous pathway; protein N(6)-(lipoyl)lysine from octanoyl-[acyl-carrier-protein]: step 2/2. In terms of biological role, catalyzes the radical-mediated insertion of two sulfur atoms into the C-6 and C-8 positions of the octanoyl moiety bound to the lipoyl domains of lipoate-dependent enzymes, thereby converting the octanoylated domains into lipoylated derivatives. The protein is Lipoyl synthase of Alkaliphilus metalliredigens (strain QYMF).